The following is a 381-amino-acid chain: Flap endonuclease 1 (381 aa).

The segment at 1-105 is N-domain; it reads MGIKGLNSII…HELDKRTSRR (105 aa). Mg(2+) is bound at residue Asp-34. DNA contacts are provided by Arg-47 and Arg-71. Residues Asp-87, Glu-156, Glu-158, Asp-177, and Asp-179 each contribute to the Mg(2+) site. The tract at residues 120–251 is I-domain; sequence EKMKHERRLV…VTALKLMKEH (132 aa). DNA is bound at residue Glu-156. DNA contacts are provided by Gly-229 and Asp-231. Asp-231 contributes to the Mg(2+) binding site. The tract at residues 338 to 346 is interaction with PCNA; it reads VQGRLDGFF.

This sequence belongs to the XPG/RAD2 endonuclease family. FEN1 subfamily. As to quaternary structure, interacts with PCNA. Three molecules of FEN1 bind to one PCNA trimer with each molecule binding to one PCNA monomer. PCNA stimulates the nuclease activity without altering cleavage specificity. Requires Mg(2+) as cofactor. Phosphorylated. Phosphorylation upon DNA damage induces relocalization to the nuclear plasma.

Its subcellular location is the nucleus. It is found in the nucleolus. The protein resides in the nucleoplasm. It localises to the mitochondrion. Its function is as follows. Structure-specific nuclease with 5'-flap endonuclease and 5'-3' exonuclease activities involved in DNA replication and repair. During DNA replication, cleaves the 5'-overhanging flap structure that is generated by displacement synthesis when DNA polymerase encounters the 5'-end of a downstream Okazaki fragment. It enters the flap from the 5'-end and then tracks to cleave the flap base, leaving a nick for ligation. Also involved in the long patch base excision repair (LP-BER) pathway, by cleaving within the apurinic/apyrimidinic (AP) site-terminated flap. Acts as a genome stabilization factor that prevents flaps from equilibrating into structures that lead to duplications and deletions. Also possesses 5'-3' exonuclease activity on nicked or gapped double-stranded DNA, and exhibits RNase H activity. Also involved in replication and repair of rDNA and in repairing mitochondrial DNA. This chain is Flap endonuclease 1, found in Candida glabrata (strain ATCC 2001 / BCRC 20586 / JCM 3761 / NBRC 0622 / NRRL Y-65 / CBS 138) (Yeast).